We begin with the raw amino-acid sequence, 231 residues long: ATP phosphoribosyltransferase (231 aa).

This sequence belongs to the ATP phosphoribosyltransferase family. Short subfamily. As to quaternary structure, heteromultimer composed of HisG and HisZ subunits.

It localises to the cytoplasm. The catalysed reaction is 1-(5-phospho-beta-D-ribosyl)-ATP + diphosphate = 5-phospho-alpha-D-ribose 1-diphosphate + ATP. It participates in amino-acid biosynthesis; L-histidine biosynthesis; L-histidine from 5-phospho-alpha-D-ribose 1-diphosphate: step 1/9. Functionally, catalyzes the condensation of ATP and 5-phosphoribose 1-diphosphate to form N'-(5'-phosphoribosyl)-ATP (PR-ATP). Has a crucial role in the pathway because the rate of histidine biosynthesis seems to be controlled primarily by regulation of HisG enzymatic activity. The protein is ATP phosphoribosyltransferase of Psychrobacter arcticus (strain DSM 17307 / VKM B-2377 / 273-4).